We begin with the raw amino-acid sequence, 577 residues long: DNA primase (577 aa).

A CHC2-type zinc finger spans residues Cys-40–Cys-64. The Toprim domain occupies Val-255–Pro-337. Mg(2+) is bound by residues Glu-261, Asp-305, and Asp-307.

This sequence belongs to the DnaG primase family. As to quaternary structure, monomer. Interacts with DnaB. The cofactor is Zn(2+). Mg(2+) is required as a cofactor.

The catalysed reaction is ssDNA + n NTP = ssDNA/pppN(pN)n-1 hybrid + (n-1) diphosphate.. Functionally, RNA polymerase that catalyzes the synthesis of short RNA molecules used as primers for DNA polymerase during DNA replication. The polypeptide is DNA primase (Buchnera aphidicola subsp. Acyrthosiphon pisum (strain APS) (Acyrthosiphon pisum symbiotic bacterium)).